The following is a 569-amino-acid chain: Putative diguanylate cyclase DgcQ (569 aa).

A run of 2 helical transmembrane segments spans residues 25-45 (LGPG…STLL) and 365-385 (IALT…WYVI). A GGDEF domain is found at 433–568 (HPFSVIQVDL…GRNRVFASDN (136 aa)). Asp441 serves as a coordination point for Mg(2+). 3 residues coordinate substrate: Asn449, His454, and Asp458. Glu484 is a binding site for Mg(2+). Residue Glu484 is the Proton acceptor of the active site.

Homodimer. The cofactor is Mg(2+).

It is found in the cell inner membrane. It catalyses the reaction 2 GTP = 3',3'-c-di-GMP + 2 diphosphate. It participates in glycan metabolism; bacterial cellulose biosynthesis. The protein operates within purine metabolism; 3',5'-cyclic di-GMP biosynthesis. Its function is as follows. Catalyzes the synthesis of cyclic-di-GMP (c-di-GMP) via the condensation of 2 GTP molecules. Cyclic-di-GMP is a second messenger which controls cell surface-associated traits in bacteria. Involved in the regulation of cellulose production. The chain is Putative diguanylate cyclase DgcQ from Shigella flexneri.